The chain runs to 386 residues: Putative F-box/kelch-repeat protein At4g11750 (386 aa).

The region spanning 5 to 51 (PVDLPYIPDDLLLNCLARVSRLYYPILSLVSKRFRSLVASLELYEIR) is the F-box domain. Kelch repeat units follow at residues 187 to 236 (KIYV…VYDG), 238 to 285 (LYLF…YGRS), and 287 to 324 (VLMW…GYSG).

This is Putative F-box/kelch-repeat protein At4g11750 from Arabidopsis thaliana (Mouse-ear cress).